A 216-amino-acid polypeptide reads, in one-letter code: UPF0711 protein C18orf21 homolog (216 aa).

2 disordered regions span residues 118–185 and 197–216; these read RSFL…ASKT and SQSE…LSSL. A compositionally biased stretch (polar residues) spans 124–136; the sequence is LKSNPTTPTSKLS. Phosphoserine is present on S126. Phosphothreonine is present on residues T130 and T139. Composition is skewed to polar residues over residues 145–157 and 167–182; these read PSSA…SGSK and TPTS…SKNA. The span at 200–209 shows a compositional bias: basic and acidic residues; the sequence is ESKKNPKMDF.

Belongs to the UPF0711 family.

The protein is UPF0711 protein C18orf21 homolog of Bos taurus (Bovine).